Reading from the N-terminus, the 1104-residue chain is Carbamoyl phosphate synthase large chain (1104 aa).

The segment at 1–403 is carboxyphosphate synthetic domain; it reads MPRRQDIQKI…SFQKALRSLE (403 aa). Residues Arg-129, Arg-170, Gly-176, Gly-177, Gln-209, Leu-211, Glu-216, Gly-242, Ile-243, His-244, Gln-286, and Glu-300 each contribute to the ATP site. Residues 133-329 form the ATP-grasp 1 domain; sequence NEAMDKIGVK…IAKMAAKLAV (197 aa). Mg(2+)-binding residues include Gln-286, Glu-300, and Asn-302. Residues Gln-286, Glu-300, and Asn-302 each contribute to the Mn(2+) site. Positions 404-552 are oligomerization domain; that stretch reads TGRAGWGCDK…YSTYEEETEV (149 aa). Residues 553–966 form a carbamoyl phosphate synthetic domain region; that stretch reads IPASKPKVMI…AFAKAELGAG (414 aa). One can recognise an ATP-grasp 2 domain in the interval 703-900; the sequence is EKILQKLNIS…LAKLASLIMS (198 aa). ATP contacts are provided by Arg-739, Lys-778, Leu-780, Glu-785, Gly-811, Ile-812, His-813, Ser-814, Gln-854, and Glu-871. The Mg(2+) site is built by Gln-854, Glu-871, and Asn-873. 3 residues coordinate Mn(2+): Gln-854, Glu-871, and Asn-873. Residues 967–1104 enclose the MGS-like domain; it reads ERLPLTGTVF…KTIQEYCPNF (138 aa). Residues 967 to 1104 are allosteric domain; it reads ERLPLTGTVF…KTIQEYCPNF (138 aa).

Belongs to the CarB family. As to quaternary structure, composed of two chains; the small (or glutamine) chain promotes the hydrolysis of glutamine to ammonia, which is used by the large (or ammonia) chain to synthesize carbamoyl phosphate. Tetramer of heterodimers (alpha,beta)4. Mg(2+) serves as cofactor. Requires Mn(2+) as cofactor.

It carries out the reaction hydrogencarbonate + L-glutamine + 2 ATP + H2O = carbamoyl phosphate + L-glutamate + 2 ADP + phosphate + 2 H(+). It catalyses the reaction hydrogencarbonate + NH4(+) + 2 ATP = carbamoyl phosphate + 2 ADP + phosphate + 2 H(+). The protein operates within amino-acid biosynthesis; L-arginine biosynthesis; carbamoyl phosphate from bicarbonate: step 1/1. Its pathway is pyrimidine metabolism; UMP biosynthesis via de novo pathway; (S)-dihydroorotate from bicarbonate: step 1/3. In terms of biological role, large subunit of the glutamine-dependent carbamoyl phosphate synthetase (CPSase). CPSase catalyzes the formation of carbamoyl phosphate from the ammonia moiety of glutamine, carbonate, and phosphate donated by ATP, constituting the first step of 2 biosynthetic pathways, one leading to arginine and/or urea and the other to pyrimidine nucleotides. The large subunit (synthetase) binds the substrates ammonia (free or transferred from glutamine from the small subunit), hydrogencarbonate and ATP and carries out an ATP-coupled ligase reaction, activating hydrogencarbonate by forming carboxy phosphate which reacts with ammonia to form carbamoyl phosphate. This chain is Carbamoyl phosphate synthase large chain, found in Nostoc sp. (strain PCC 7120 / SAG 25.82 / UTEX 2576).